The following is a 549-amino-acid chain: Eukaryotic translation initiation factor 4B2 (549 aa).

Disordered regions lie at residues M1–R446 and F465–W549. A compositionally biased stretch (low complexity) spans A24–K46. 2 stretches are compositionally biased toward gly residues: residues R96–S109 and S126–S136. The short motif at G169–F176 is the Nuclear localization signal 1 element. The segment covering R184–F218 has biased composition (gly residues). Residues S234–F241 carry the Nuclear localization signal 2 motif. The segment covering Q263–T278 has biased composition (basic and acidic residues). Residues S281–P292 are compositionally biased toward polar residues. The span at R299–K323 shows a compositional bias: basic and acidic residues. A compositionally biased stretch (low complexity) spans S327–A349. Basic and acidic residues-rich tracts occupy residues A369–Q431, E485–R507, and P518–W549.

It belongs to the eIF-4 subunit B family. As to quaternary structure, homodimer. Nonspherical monomer. mRNA-discriminating component of initiation complexes. Phosphorylated.

It localises to the nucleus. Functionally, promotes the eIF4F and eIF4A RNA-dependent ATP-hydrolysis activity with different efficiency depending on mRNAs, thus providing mRNA discrimination during initiation of translation. The polypeptide is Eukaryotic translation initiation factor 4B2 (Arabidopsis thaliana (Mouse-ear cress)).